Consider the following 224-residue polypeptide: Probable C-&gt;U-editing enzyme APOBEC-2 (224 aa).

Residues 1–25 (MAQKEEAAAATEAASQNGEDLENLD) form a disordered region. Residues Glu60 and His98 each coordinate Zn(2+). Residues 64-169 (GRNKTFLCYV…LEIQDALKKL (106 aa)) enclose the CMP/dCMP-type deaminase domain. Glu100 acts as the Proton donor in catalysis. The Zn(2+) site is built by Cys128 and Cys131.

The protein belongs to the cytidine and deoxycytidylate deaminase family. As to quaternary structure, homotetramer. It depends on Zn(2+) as a cofactor.

It catalyses the reaction cytidine(6666) in apoB mRNA + H2O + H(+) = uridine(6666) in apoB mRNA + NH4(+). Probable C to U editing enzyme whose physiological substrate is not yet known. Does not display detectable apoB mRNA editing. Has a low intrinsic cytidine deaminase activity. May play a role in the epigenetic regulation of gene expression through the process of active DNA demethylation. The sequence is that of Probable C-&gt;U-editing enzyme APOBEC-2 (APOBEC2) from Pongo pygmaeus (Bornean orangutan).